The chain runs to 311 residues: Meteorin-like protein (311 aa).

Residues 1–13 (MRGAARAAWGRAG) show a composition bias toward low complexity. The interval 1 to 24 (MRGAARAAWGRAGQPWPRPPAPGP) is disordered. A signal peptide spans 1–45 (MRGAARAAWGRAGQPWPRPPAPGPPPPPLPLLLLLLAGLLGGAGA). 5 cysteine pairs are disulfide-bonded: C52/C75, C107/C143, C188/C260, C191/C284, and C201/C306.

This sequence belongs to the meteorin family. Highly expressed in the skeletal muscle, in subcutaneous adipose tissue, epididymal white adipose tissue depots and heart. Also expressed in brown adipose tissues and kidney.

The protein localises to the secreted. Functionally, hormone induced following exercise or cold exposure that promotes energy expenditure. Induced either in the skeletal muscle after exercise or in adipose tissue following cold exposure and is present in the circulation. Able to stimulate energy expenditure associated with the browning of the white fat depots and improves glucose tolerance. Does not promote an increase in a thermogenic gene program via direct action on adipocytes, but acts by stimulating several immune cell subtypes to enter the adipose tissue and activate their prothermogenic actions. Stimulates an eosinophil-dependent increase in IL4 expression and promotes alternative activation of adipose tissue macrophages, which are required for the increased expression of the thermogenic and anti-inflammatory gene programs in fat. Required for some cold-induced thermogenic responses, suggesting a role in metabolic adaptations to cold temperatures. In Homo sapiens (Human), this protein is Meteorin-like protein (METRNL).